Here is a 314-residue protein sequence, read N- to C-terminus: Oxalate oxidoreductase subunit beta (314 aa).

Positions 24, 27, 52, and 225 each coordinate [4Fe-4S] cluster.

As to quaternary structure, dimer of heterotrimer of one alpha, one beta and one delta subunit. [4Fe-4S] cluster serves as cofactor.

The catalysed reaction is oxidized 2[4Fe-4S]-[ferredoxin] + oxalate = reduced 2[4Fe-4S]-[ferredoxin] + 2 CO2. In terms of biological role, catalyzes the anaerobic oxidation of oxalate using a broad range of electron acceptors, including ferredoxin and the nickel-dependent carbon monoxide dehydrogenase. Does not require coenzyme A as cosubstrate. Enables anaerobic growth on oxalate which is used as energy source by the bacteria. In Moorella thermoacetica (strain ATCC 39073 / JCM 9320), this protein is Oxalate oxidoreductase subunit beta.